The following is a 276-amino-acid chain: 2-dehydro-3-deoxyphosphooctonate aldolase (276 aa).

It belongs to the KdsA family.

It is found in the cytoplasm. It carries out the reaction D-arabinose 5-phosphate + phosphoenolpyruvate + H2O = 3-deoxy-alpha-D-manno-2-octulosonate-8-phosphate + phosphate. It functions in the pathway carbohydrate biosynthesis; 3-deoxy-D-manno-octulosonate biosynthesis; 3-deoxy-D-manno-octulosonate from D-ribulose 5-phosphate: step 2/3. The protein operates within bacterial outer membrane biogenesis; lipopolysaccharide biosynthesis. This is 2-dehydro-3-deoxyphosphooctonate aldolase from Xanthomonas axonopodis pv. citri (strain 306).